Here is a 64-residue protein sequence, read N- to C-terminus: Large ribosomal subunit protein bL33c (64 aa).

Belongs to the bacterial ribosomal protein bL33 family.

It is found in the plastid. The protein resides in the chloroplast. In Huperzia lucidula (Shining clubmoss), this protein is Large ribosomal subunit protein bL33c.